Consider the following 422-residue polypeptide: Nuclear hormone receptor family member nhr-54 (422 aa).

The segment at residues 14–92 (SVKCAICYKA…LGMTTENVRT (79 aa)) is a DNA-binding region (nuclear receptor). NR C4-type zinc fingers lie at residues 17–37 (CAIC…CRAC) and 53–80 (CTRK…FKKC). Residues 161-422 (PDDDVIVELN…VFTEPEFFRV (262 aa)) form the NR LBD domain.

It belongs to the nuclear hormone receptor family.

It is found in the nucleus. Its function is as follows. Orphan nuclear receptor. The protein is Nuclear hormone receptor family member nhr-54 (nhr-54) of Caenorhabditis elegans.